A 151-amino-acid chain; its full sequence is Small ribosomal subunit protein uS15z (151 aa).

The protein belongs to the universal ribosomal protein uS15 family.

The sequence is that of Small ribosomal subunit protein uS15z from Oryza sativa subsp. japonica (Rice).